Consider the following 318-residue polypeptide: Nisin-resistance protein (318 aa).

The helical transmembrane segment at 7–28 threads the bilayer; sequence ILLGLVAVCALFLGIIYLWGYK.

It is found in the cell membrane. This Lactococcus lactis subsp. lactis (Streptococcus lactis) protein is Nisin-resistance protein (nsr).